A 145-amino-acid polypeptide reads, in one-letter code: Large ribosomal subunit protein uL15 (145 aa).

Positions 20-54 are disordered; the sequence is GRGMASGKGKTATRGHKGQNSRSGGGVRPGFEGGQ. The segment covering 42–52 has biased composition (gly residues); sequence SGGGVRPGFEG.

It belongs to the universal ribosomal protein uL15 family. As to quaternary structure, part of the 50S ribosomal subunit.

Binds to the 23S rRNA. The sequence is that of Large ribosomal subunit protein uL15 from Mycoplasma mycoides subsp. mycoides SC (strain CCUG 32753 / NCTC 10114 / PG1).